We begin with the raw amino-acid sequence, 302 residues long: Methionyl-tRNA formyltransferase (302 aa).

A (6S)-5,6,7,8-tetrahydrofolate-binding site is contributed by 107 to 110; the sequence is SDLP.

Belongs to the Fmt family.

The catalysed reaction is L-methionyl-tRNA(fMet) + (6R)-10-formyltetrahydrofolate = N-formyl-L-methionyl-tRNA(fMet) + (6S)-5,6,7,8-tetrahydrofolate + H(+). Attaches a formyl group to the free amino group of methionyl-tRNA(fMet). The formyl group appears to play a dual role in the initiator identity of N-formylmethionyl-tRNA by promoting its recognition by IF2 and preventing the misappropriation of this tRNA by the elongation apparatus. The protein is Methionyl-tRNA formyltransferase of Rickettsia massiliae (strain Mtu5).